The sequence spans 231 residues: Albumin-2 (231 aa).

Hemopexin repeat units follow at residues 4 to 55 (TGYI…FKSL), 62 to 112 (SYGV…FPFF), 118 to 166 (ENGI…FPCF), and 172 to 223 (ESGT…WPSL). 4 residues coordinate Ca(2+): asparagine 8, aspartate 66, aspartate 122, and aspartate 176.

In terms of assembly, monomer and homodimer.

It localises to the cytoplasm. The protein resides in the cytosol. May play a role in response to oxidative stress and polyamine biosynthesis. The polypeptide is Albumin-2 (Pisum sativum (Garden pea)).